The sequence spans 282 residues: MIPWNAYVRLLRLNKPIGILLLWYPTAWALWMANQGFPSIDLLMIFLLGTVFMRSAGCVINDIADRHIDRHVARTQFRPLTSGEVSLSEAFILLFILLCASLLLLLKLPINCFYFAVISVLITFVYPFCKRFLNAPQLILGLAFSMGIPMAFIASGKNLNSDFVVLFLINFTWIIAYDTMYAMTDKADDLKIGVKSTAIYFASYDRLIIALLLIFLHSLWLVWAINKNAEWFFYLLWCTAAGILTYQLKLIYARIPKNCFKAFLVSGYYGLVMWFAVGLALI.

The next 9 membrane-spanning stretches (helical) occupy residues 17–37, 40–60, 90–110, 113–133, 135–155, 163–183, 207–227, 231–251, and 262–282; these read IGIL…NQGF, IDLL…GCVI, AFIL…KLPI, FYFA…KRFL, APQL…FIAS, FVVL…MYAM, LIIA…AINK, WFFY…LKLI, and AFLV…LALI.

This sequence belongs to the UbiA prenyltransferase family. The cofactor is Mg(2+).

The protein resides in the cell inner membrane. The enzyme catalyses all-trans-octaprenyl diphosphate + 4-hydroxybenzoate = 4-hydroxy-3-(all-trans-octaprenyl)benzoate + diphosphate. The protein operates within cofactor biosynthesis; ubiquinone biosynthesis. Functionally, catalyzes the prenylation of para-hydroxybenzoate (PHB) with an all-trans polyprenyl group. Mediates the second step in the final reaction sequence of ubiquinone-8 (UQ-8) biosynthesis, which is the condensation of the polyisoprenoid side chain with PHB, generating the first membrane-bound Q intermediate 3-octaprenyl-4-hydroxybenzoate. This chain is 4-hydroxybenzoate octaprenyltransferase, found in Legionella pneumophila (strain Paris).